The primary structure comprises 328 residues: Versiconal hemiacetal acetate esterase (328 aa).

The Involved in the stabilization of the negatively charged intermediate by the formation of the oxyanion hole signature appears at 82-84; it reads HGG. Residues Ser156, Asp260, and His290 contribute to the active site.

This sequence belongs to the 'GDXG' lipolytic enzyme family.

The enzyme catalyses (2S,3S)-versiconal hemiacetal acetate + H2O = (2S-3S)-versiconal hemiacetal + acetate + H(+). It carries out the reaction (3S)-versiconol acetate + H2O = (S)-versiconol + acetate + H(+). It participates in mycotoxin biosynthesis. Its function is as follows. Versiconal hemiacetal acetate esterase; part of the fragmented gene cluster that mediates the biosynthesis of dothistromin (DOTH), a polyketide toxin very similar in structure to the aflatoxin precursor, versicolorin B. The first step of the pathway is the conversion of acetate to norsolorinic acid (NOR) and requires the fatty acid synthase subunits hexA and hexB, as well as the polyketide synthase pksA. PksA combines a hexanoyl starter unit and 7 malonyl-CoA extender units to synthesize the precursor NOR. The hexanoyl starter unit is provided to the acyl-carrier protein (ACP) domain by the fungal fatty acid synthase hexA/hexB. The second step is the conversion of NOR to averantin (AVN) and requires the norsolorinic acid ketoreductase nor1, which catalyzes the dehydration of norsolorinic acid to form (1'S)-averantin. The cytochrome P450 monooxygenase avnA then catalyzes the hydroxylation of AVN to 5'hydroxyaverantin (HAVN). The next step is performed by adhA that transforms HAVN to averufin (AVF). Averufin might then be converted to hydroxyversicolorone by cypX and avfA. Hydroxyversicolorone is further converted versiconal hemiacetal acetate (VHA) by moxY. VHA is then the substrate for the versiconal hemiacetal acetate esterase est1 to yield versiconal (VAL). Versicolorin B synthase vbsA then converts VAL to versicolorin B (VERB) by closing the bisfuran ring. Then, the activity of the versicolorin B desaturase verB leads to versicolorin A (VERA). DotB, a predicted chloroperoxidase, may perform epoxidation of the A-ring of VERA. Alternatively, a cytochrome P450, such as cypX or avnA could catalyze this step. It is also possible that another, uncharacterized, cytochrome P450 enzyme is responsible for this step. Opening of the epoxide could potentially be achieved by the epoxide hydrolase epoA. However, epoA seems not to be required for DOTH biosynthesis, but other epoxide hydrolases may have the ability to complement this hydrolysis. Alternatively, opening of the epoxide ring could be achieved non-enzymatically. The next step is the deoxygenation of ring A to yield the 5,8-dihydroxyanthraquinone which is most likely catalyzed by the NADPH dehydrogenase encoded by ver1. The last stages of DOTH biosynthesis are proposed to involve hydroxylation of the bisfuran. OrdB and norB might have oxidative roles here. An alternative possibility is that cytochrome P450 monoogenases such as avnA and cypX might perform these steps in addition to previously proposed steps. The chain is Versiconal hemiacetal acetate esterase from Dothistroma septosporum (strain NZE10 / CBS 128990) (Red band needle blight fungus).